Here is a 411-residue protein sequence, read N- to C-terminus: Serine hydroxymethyltransferase (411 aa).

(6S)-5,6,7,8-tetrahydrofolate-binding positions include leucine 113 and 117–119 (GHL). Position 222 is an N6-(pyridoxal phosphate)lysine (lysine 222). Position 346–348 (346–348 (SPF)) interacts with (6S)-5,6,7,8-tetrahydrofolate.

The protein belongs to the SHMT family. In terms of assembly, homodimer. The cofactor is pyridoxal 5'-phosphate.

The protein resides in the cytoplasm. The enzyme catalyses (6R)-5,10-methylene-5,6,7,8-tetrahydrofolate + glycine + H2O = (6S)-5,6,7,8-tetrahydrofolate + L-serine. It participates in one-carbon metabolism; tetrahydrofolate interconversion. The protein operates within amino-acid biosynthesis; glycine biosynthesis; glycine from L-serine: step 1/1. Functionally, catalyzes the reversible interconversion of serine and glycine with tetrahydrofolate (THF) serving as the one-carbon carrier. This reaction serves as the major source of one-carbon groups required for the biosynthesis of purines, thymidylate, methionine, and other important biomolecules. Also exhibits THF-independent aldolase activity toward beta-hydroxyamino acids, producing glycine and aldehydes, via a retro-aldol mechanism. This Prochlorococcus marinus (strain NATL2A) protein is Serine hydroxymethyltransferase.